The primary structure comprises 263 residues: HTH-type transcriptional repressor NanR (263 aa).

Residues 1 to 22 (MGLMNAFDSQTEDSSPAIGRNL) are disordered. One can recognise an HTH gntR-type domain in the interval 30-98 (KKLSEMVEEE…NGERARVSRP (69 aa)). The segment at residues 58-77 (ERELMAFFNVGRPSVREALA) is a DNA-binding region (H-T-H motif).

The protein belongs to the NanR family.

In terms of biological role, transcriptional repressor that controls expression of the genes required for the catabolism of sialic acids. The protein is HTH-type transcriptional repressor NanR of Shigella boydii serotype 4 (strain Sb227).